A 649-amino-acid chain; its full sequence is tRNA-guanine(15) transglycosylase (649 aa).

The Nucleophile role is filled by D88. Residues D123 and A194 each coordinate substrate. Positions 280, 282, and 285 each coordinate Zn(2+). Residues 573–648 (KYRIVIDSSV…VAATLRGGLK (76 aa)) form the PUA domain.

Belongs to the archaeosine tRNA-ribosyltransferase family. Requires Zn(2+) as cofactor.

The catalysed reaction is guanosine(15) in tRNA + 7-cyano-7-deazaguanine = 7-cyano-7-carbaguanosine(15) in tRNA + guanine. It functions in the pathway tRNA modification; archaeosine-tRNA biosynthesis. Its function is as follows. Exchanges the guanine residue with 7-cyano-7-deazaguanine (preQ0) at position 15 in the dihydrouridine loop (D-loop) of archaeal tRNAs. The sequence is that of tRNA-guanine(15) transglycosylase from Methanococcus maripaludis (strain C6 / ATCC BAA-1332).